Here is a 711-residue protein sequence, read N- to C-terminus: F-box only protein 34 (711 aa).

Disordered regions lie at residues 1 to 36, 249 to 271, 337 to 372, and 494 to 529; these read MHLKPYWKLQKKEHPPEVSRETQRTPMNHQKAVNDE, SESYSAPGACEEPTERGNLEVGE, DTQVNPVGSVSVDCGPSRADRCSPKEDQAWDGASQD, and YSQLNESTTKESSEASQLEDAAGGDSASEEKSGSAE. Residues 10–23 show a composition bias toward basic and acidic residues; the sequence is QKKEHPPEVSRETQ. Basic and acidic residues predominate over residues 354–364; sequence RADRCSPKEDQ. The region spanning 572–624 is the F-box domain; the sequence is QQYMAFLPHHIMVKIFRLLPTKSLVALKCTCCYFKFIIEYYNIRPADSRWVRD.

As to quaternary structure, directly interacts with SKP1 and CUL1.

In terms of biological role, substrate-recognition component of the SCF (SKP1-CUL1-F-box protein)-type E3 ubiquitin ligase complex. This is F-box only protein 34 (FBXO34) from Homo sapiens (Human).